The primary structure comprises 417 residues: Diphosphomevalonate decarboxylase 1 (417 aa).

22–25 lines the (R)-5-diphosphomevalonate pocket; the sequence is YWGK. The short motif at 39–47 is the Peroxisomal targeting signal PTS2 element; the sequence is RVSLDPDHL. (R)-5-diphosphomevalonate contacts are provided by residues arginine 77, 160-165, and threonine 216; that span reads SGSACR.

It belongs to the diphosphomevalonate decarboxylase family. Homodimer.

Its subcellular location is the peroxisome. It carries out the reaction (R)-5-diphosphomevalonate + ATP = isopentenyl diphosphate + ADP + phosphate + CO2. Its pathway is isoprenoid biosynthesis; isopentenyl diphosphate biosynthesis via mevalonate pathway; isopentenyl diphosphate from (R)-mevalonate: step 3/3. Its function is as follows. Performs the first committed step in the biosynthesis of isoprene-containing compounds such as sterols and terpenoids. Component of the triterpene saponins (e.g. ginsenosides or panaxosides) and phytosterols biosynthetic pathways. Catalyzes the conversion of mevalonate diphosphate to isopentenyl diphosphate (IPP). The chain is Diphosphomevalonate decarboxylase 1 from Panax ginseng (Korean ginseng).